Here is a 132-residue protein sequence, read N- to C-terminus: Small ribosomal subunit protein uS8 (132 aa).

It belongs to the universal ribosomal protein uS8 family. In terms of assembly, part of the 30S ribosomal subunit. Contacts proteins S5 and S12.

One of the primary rRNA binding proteins, it binds directly to 16S rRNA central domain where it helps coordinate assembly of the platform of the 30S subunit. The sequence is that of Small ribosomal subunit protein uS8 from Rickettsia canadensis (strain McKiel).